Reading from the N-terminus, the 104-residue chain is N(4)-acetylcytidine amidohydrolase (104 aa).

The region spanning methionine 7–isoleucine 93 is the ASCH domain. The active-site Proton acceptor is lysine 22. Threonine 25 serves as the catalytic Nucleophile. Glutamate 75 functions as the Proton donor in the catalytic mechanism.

It belongs to the N(4)-acetylcytidine amidohydrolase family.

The catalysed reaction is N(4)-acetylcytidine + H2O = cytidine + acetate + H(+). It carries out the reaction N(4)-acetyl-2'-deoxycytidine + H2O = 2'-deoxycytidine + acetate + H(+). It catalyses the reaction N(4)-acetylcytosine + H2O = cytosine + acetate + H(+). In terms of biological role, catalyzes the hydrolysis of N(4)-acetylcytidine (ac4C). The protein is N(4)-acetylcytidine amidohydrolase of Vibrio vulnificus (strain CMCP6).